Reading from the N-terminus, the 401-residue chain is Dual-specificity RNA methyltransferase RlmN (401 aa).

The active-site Proton acceptor is the Glu-114. A Radical SAM core domain is found at 120–365 (DKGRGTLCVS…TMVRRTRGDD (246 aa)). Cys-127 and Cys-370 are joined by a disulfide. Cys-134, Cys-138, and Cys-141 together coordinate [4Fe-4S] cluster. S-adenosyl-L-methionine-binding positions include 187–188 (GE), Ser-219, 241–243 (SLH), and Asn-327. The S-methylcysteine intermediate role is filled by Cys-370.

The protein belongs to the radical SAM superfamily. RlmN family. [4Fe-4S] cluster is required as a cofactor.

The protein resides in the cytoplasm. The catalysed reaction is adenosine(2503) in 23S rRNA + 2 reduced [2Fe-2S]-[ferredoxin] + 2 S-adenosyl-L-methionine = 2-methyladenosine(2503) in 23S rRNA + 5'-deoxyadenosine + L-methionine + 2 oxidized [2Fe-2S]-[ferredoxin] + S-adenosyl-L-homocysteine. It catalyses the reaction adenosine(37) in tRNA + 2 reduced [2Fe-2S]-[ferredoxin] + 2 S-adenosyl-L-methionine = 2-methyladenosine(37) in tRNA + 5'-deoxyadenosine + L-methionine + 2 oxidized [2Fe-2S]-[ferredoxin] + S-adenosyl-L-homocysteine. Specifically methylates position 2 of adenine 2503 in 23S rRNA and position 2 of adenine 37 in tRNAs. m2A2503 modification seems to play a crucial role in the proofreading step occurring at the peptidyl transferase center and thus would serve to optimize ribosomal fidelity. The chain is Dual-specificity RNA methyltransferase RlmN from Xanthomonas campestris pv. campestris (strain B100).